The primary structure comprises 377 residues: SH2/SH3 adapter protein NCK1 (377 aa).

Residue alanine 2 is modified to N-acetylalanine. The 60-residue stretch at 2 to 61 (AEEVVVVAKFDYVAQQEQELDIKKNERLWLLDDSKSWWRVRNSMNKTGFVPSNYVERKNS) folds into the SH3 1 domain. Serine 85, serine 89, serine 91, and serine 96 each carry phosphoserine. Tyrosine 105 bears the Phosphotyrosine mark. The region spanning 106–165 (DLNMPAYVKFNYMAEREDELSLIKGTKVIVMEKCSDGWWRGSYNGQVGWFPSNYVTEEGD) is the SH3 2 domain. The residue at position 166 (serine 166) is a Phosphoserine. Positions 190–252 (QVLHVVQALY…PKNYVTVMQN (63 aa)) constitute an SH3 3 domain. Positions 282 to 376 (WYYGKVTRHQ…GEKLYLVKHL (95 aa)) constitute an SH2 domain.

As to quaternary structure, interacts (via SH2 domain and SH3 domain 2) with EGFR. Interacts with PAK1 and SOS1. Interacts (via SH3 domains) with PKN2. Associates with BLNK, PLCG1, VAV1 and NCK1 in a B-cell antigen receptor-dependent fashion. Interacts with SOCS7. This interaction is required for nuclear import. Part of a complex containing PPP1R15B, PP1 and NCK1. Interacts with RALGPS1. Interacts with CAV2 (tyrosine phosphorylated form). Interacts with ADAM15. Interacts with FASLG. Directly interacts with RASA1. Interacts with isoform 4 of MINK1. Interacts with FLT1 (tyrosine phosphorylated). Interacts with KDR (tyrosine phosphorylated). Interacts (via SH2 domain) with EPHB1; activates the JUN cascade to regulate cell adhesion. Interacts with EPHA2. Interacts (via SH2 domain) with PDGFRB (tyrosine phosphorylated). Interacts with the inactive form of EIF2AK2/PKR. Interacts with PTPN1. Interacts with INSR/insulin receptor (in response to insulin stimulation); This interaction may mediate PTPN1 recruitment leading to INSR dephosphorylation. Interacts with IRS1. Phosphorylated on Ser and Tyr residues. Phosphorylated in response to activation of EGFR and FcERI. Phosphorylated by activated PDGFRB.

The protein localises to the cytoplasm. The protein resides in the endoplasmic reticulum. Its subcellular location is the nucleus. Adapter protein which associates with tyrosine-phosphorylated growth factor receptors, such as KDR and PDGFRB, or their cellular substrates. Maintains low levels of EIF2S1 phosphorylation by promoting its dephosphorylation by PP1. Plays a role in the DNA damage response, not in the detection of the damage by ATM/ATR, but for efficient activation of downstream effectors, such as that of CHEK2. Plays a role in ELK1-dependent transcriptional activation in response to activated Ras signaling. Modulates the activation of EIF2AK2/PKR by dsRNA. May play a role in cell adhesion and migration through interaction with ephrin receptors. This is SH2/SH3 adapter protein NCK1 (NCK1) from Homo sapiens (Human).